Reading from the N-terminus, the 90-residue chain is MSDTVFCRKYQKELDALPFPPLPGAKGQEIQQTVSKQAWDEWQALQTRLINEKHLSLLDPDARAYLMEQMERFLDNRETDQAEGYVPPSQ.

It belongs to the Fe(2+)-trafficking protein family.

In terms of biological role, could be a mediator in iron transactions between iron acquisition and iron-requiring processes, such as synthesis and/or repair of Fe-S clusters in biosynthetic enzymes. This chain is Probable Fe(2+)-trafficking protein, found in Chromohalobacter salexigens (strain ATCC BAA-138 / DSM 3043 / CIP 106854 / NCIMB 13768 / 1H11).